Consider the following 299-residue polypeptide: Dermonecrotic toxin LiSicTox-alphaIVA1 (299 aa).

The N-terminal stretch at 1-18 (MLFPTALIFGCWALVIEG) is a signal peptide. Histidine 30 is a catalytic residue. Mg(2+)-binding residues include glutamate 50 and aspartate 52. Histidine 66 acts as the Nucleophile in catalysis. 2 disulfides stabilise this stretch: cysteine 70/cysteine 76 and cysteine 72/cysteine 217. Aspartate 110 contributes to the Mg(2+) binding site.

The protein belongs to the arthropod phospholipase D family. Class II subfamily. Class IIa sub-subfamily. It depends on Mg(2+) as a cofactor. In terms of tissue distribution, expressed by the venom gland.

The protein resides in the secreted. The enzyme catalyses an N-(acyl)-sphingosylphosphocholine = an N-(acyl)-sphingosyl-1,3-cyclic phosphate + choline. It carries out the reaction an N-(acyl)-sphingosylphosphoethanolamine = an N-(acyl)-sphingosyl-1,3-cyclic phosphate + ethanolamine. The catalysed reaction is a 1-acyl-sn-glycero-3-phosphocholine = a 1-acyl-sn-glycero-2,3-cyclic phosphate + choline. It catalyses the reaction a 1-acyl-sn-glycero-3-phosphoethanolamine = a 1-acyl-sn-glycero-2,3-cyclic phosphate + ethanolamine. In terms of biological role, dermonecrotic toxins cleave the phosphodiester linkage between the phosphate and headgroup of certain phospholipids (sphingolipid and lysolipid substrates), forming an alcohol (often choline) and a cyclic phosphate. This toxin acts on sphingomyelin (SM) with high activity. It may also act on ceramide phosphoethanolamine (CPE), lysophosphatidylcholine (LPC) and lysophosphatidylethanolamine (LPE), but not on lysophosphatidylserine (LPS), and lysophosphatidylglycerol (LPG). It acts by transphosphatidylation, releasing exclusively cyclic phosphate products as second products. Has hemolytic activity in human erythrocytes in a dose-dependent manner. In vivo, this toxin induces dermonecrosis, edema, hemorrhage, massive inflammatory response, as well as vascular permeability. In addition, thrombus formation has also been detected in dermal blood vessels. It also induces platelet aggregation. It is noteworthy that a Glu-248 replaces the Asp present in paralogs, without decrease in catalytic and hemolytic activities. The sequence is that of Dermonecrotic toxin LiSicTox-alphaIVA1 from Loxosceles intermedia (Brown spider).